Reading from the N-terminus, the 221-residue chain is Large ribosomal subunit protein uL16x (221 aa).

Belongs to the universal ribosomal protein uL16 family. In terms of assembly, component of the small ribosomal subunit. Mature ribosomes consist of a small (40S) and a large (60S) subunit. The 40S subunit contains about 33 different proteins and 1 molecule of RNA (18S). The 60S subunit contains about 49 different proteins and 3 molecules of RNA (25S, 5.8S and 5S).

The polypeptide is Large ribosomal subunit protein uL16x (RPL10C) (Arabidopsis thaliana (Mouse-ear cress)).